A 1403-amino-acid polypeptide reads, in one-letter code: Baculoviral IAP repeat-containing protein 1e (1403 aa).

BIR repeat units follow at residues 60 to 127 (EAKR…CEFL), 159 to 227 (EEAR…CEFL), and 278 to 345 (EELR…CVFL). 4 residues coordinate Zn(2+): Cys315, Cys318, His335, and Cys342. Positions 464 to 759 (SVMCVEGETG…EFLAAVRLTE (296 aa)) constitute an NACHT domain. 473–478 (GSGKTT) is an ATP binding site.

In terms of assembly, component of the NLRC4 inflammasome, at least composed of NLRC4, caspase-1 (CASP1) and some NAIP protein. Flagellin binding by NAIP5 triggers assembly of the inflammasome, a huge complex that contains a single NAIP5 chain and multiple copies of NLRC4. (Microbial infection) Interacts with S.typhimurium (Salmonella) flagellin. As to quaternary structure, (Microbial infection) Interacts with L.pneumophila flagellin. Detected in macrophages (at protein level).

In terms of biological role, sensor component of the NLRC4 inflammasome that specifically recognizes and binds flagellin from pathogenic bacteria such as Legionella or Salmonella. Association of pathogenic bacteria proteins drives in turn drive assembly and activation of the NLRC4 inflammasome, promoting caspase-1 activation, cytokine production and macrophage pyroptosis. The NLRC4 inflammasome is activated as part of the innate immune response to a range of intracellular bacteria. The NLRC4 inflammasome senses Gram-negative bacteria such as L.pneumophila and P.aeruginosa, enteric pathogens S.typhimurium (Salmonella) and S.flexneri. May contribute to prevent motor-neuron apoptosis induced by a variety of signals. The sequence is that of Baculoviral IAP repeat-containing protein 1e from Mus musculus (Mouse).